The sequence spans 283 residues: Circadian clock oscillator protein KaiA (283 aa).

Residues 1–146 (MAQSTALTIC…LFRLPALKES (146 aa)) form a psR domain, not required to form KaiA:KaiB:KaiC complex, or for a full KaiC phosphorylation cycle region. A KaiA N-terminal domain is found at 3-163 (QSTALTICGL…RLSQKLKERL (161 aa)). The flexible linker stretch occupies residues 164-172 (GYLGVYYKR). Positions 173–281 (DTAFFFRRMS…CEMYRRSIPR (109 aa)) constitute a KaiA C-terminal domain.

It belongs to the KaiA family. In terms of assembly, homodimer. The KaiABC complex composition changes during the circadian cycle to control KaiC phosphorylation. Complexes KaiC(6), KaiA(2-4):KaiC(6), KaiB(6):KaiC(6) and KaiC(6):KaiB(6):KaiA(12) are among the most important forms, many form cooperatively. Binds to KaiB and KaiC, the N-terminus (pseudoreceiver domain PsR) is not required for either interaction. 1 KaiB binds to one subunit of the KaiA homodimer. KaiA and CikA bind to the same region of the KaiB(fs) form and therefore compete.

Functionally, key component of the KaiABC oscillator complex, which constitutes the main circadian regulator in cyanobacteria. Complex composition changes during the circadian cycle to control KaiC phosphorylation. KaiA stimulates KaiC autophosphorylation, while KaiB sequesters KaiA, leading to KaiC autodephosphorylation. KaiA binding to the KaiC CII domain during the subjective day yields KaiA(2-4):KaiC(6) complexes which stimulate KaiC autophosphorylation. Phospho-Ser-431 KaiC accumulation triggers binding of KaiB during the subjective night to form the KaiB(6):KaiC(6) complex, leading to changes in the output regulators CikA and SasA. KaiB(6):KaiC(6) formation exposes a site for KaiA binding on KaiB that sequesters KaiA from KaiC's CII domain, making the KaiC(6):KaiB(6):KaiA(12) complex resulting in KaiC autodephosphorylation. Complete dephosphorylation of KaiC leads to dissociation of KaiA(2):KaiB(1), completing 1 cycle of the Kai oscillator. Formation of the KaiB:KaiC complex is promoted by KaiA, helping switch KaiC from its autophosphorylation to autodephosphatase function. Binds oxidized quinones via the N-terminal PsR domain, allowing it to sense redox changes and possibly mediate clock input. The polypeptide is Circadian clock oscillator protein KaiA (Thermosynechococcus vestitus (strain NIES-2133 / IAM M-273 / BP-1)).